The chain runs to 37 residues: Cytochrome b6-f complex subunit 5 (37 aa).

A helical transmembrane segment spans residues 5–25; the sequence is LLSGIVLGMIPVTLAGLFVTA.

This sequence belongs to the PetG family. In terms of assembly, the 4 large subunits of the cytochrome b6-f complex are cytochrome b6, subunit IV (17 kDa polypeptide, PetD), cytochrome f and the Rieske protein, while the 4 small subunits are PetG, PetL, PetM and PetN. The complex functions as a dimer.

The protein resides in the plastid. The protein localises to the chloroplast thylakoid membrane. Component of the cytochrome b6-f complex, which mediates electron transfer between photosystem II (PSII) and photosystem I (PSI), cyclic electron flow around PSI, and state transitions. PetG is required for either the stability or assembly of the cytochrome b6-f complex. The chain is Cytochrome b6-f complex subunit 5 from Staurastrum punctulatum (Green alga).